The primary structure comprises 133 residues: Large ribosomal subunit protein uL22 (133 aa).

It belongs to the universal ribosomal protein uL22 family. Part of the 50S ribosomal subunit.

Functionally, this protein binds specifically to 23S rRNA; its binding is stimulated by other ribosomal proteins, e.g. L4, L17, and L20. It is important during the early stages of 50S assembly. It makes multiple contacts with different domains of the 23S rRNA in the assembled 50S subunit and ribosome. In terms of biological role, the globular domain of the protein is located near the polypeptide exit tunnel on the outside of the subunit, while an extended beta-hairpin is found that lines the wall of the exit tunnel in the center of the 70S ribosome. This Nocardia farcinica (strain IFM 10152) protein is Large ribosomal subunit protein uL22.